We begin with the raw amino-acid sequence, 419 residues long: Tetraspanning orphan receptor (419 aa).

The Cytoplasmic portion of the chain corresponds to 1–28 (MPRAPALLTNDARHQFTCCLCLHVRTGT). Residues 29–49 (IIFGITQIIIQLVFISFLFLM) form a helical membrane-spanning segment. Topologically, residues 50–165 (TFNPRLIPED…EVKIKHFSPY (116 aa)) are extracellular. The chain crosses the membrane as a helical span at residues 166 to 186 (IAVCVTTFSLAFCCFMVHGAI). Over 187–193 (TKQPTHL) the chain is Cytoplasmic. Residues 194–214 (LPFFFIQVFDLIICLIHILGF) traverse the membrane as a helical segment. Residues 215-240 (MSSTSDLRLMIHTKTGPIYIKSTGFT) lie on the Extracellular side of the membrane. Residues 241 to 261 (FIILSISCMMLAFKAYCLGMV) form a helical membrane-spanning segment. Residues 262–419 (WDCYKYLMLN…SAPSNAHSSC (158 aa)) are Cytoplasmic-facing. The span at 303–316 (NNSIGNSGSPNEPN) shows a compositional bias: low complexity. The interval 303 to 328 (NNSIGNSGSPNEPNTRPRPEPITYDP) is disordered.

As to quaternary structure, interacts (via N-terminal extracellular domain) with human C2a. Phosphorylated on tyrosine residues.

The protein resides in the cell membrane. Its function is as follows. Cell surface receptor that binds to human complement C2a protein. This results in inhibition of the classical and lectin pathways of complement activation, probably due to interference with binding of C2a to C4b and interference with cleavage by C1 or MASP2 such that C3 convertase cannot be formed. This infers resistance to complement-mediated cell lysis, allowing parasite survival and infection. The chain is Tetraspanning orphan receptor from Schistosoma mansoni (Blood fluke).